The primary structure comprises 95 residues: uncharacterized protein (95 aa).

This is an uncharacterized protein from Bacillus subtilis (strain 168).